The following is a 382-amino-acid chain: Galactokinase (382 aa).

Glu34 to Asp37 lines the substrate pocket. Gly124–Ser130 provides a ligand contact to ATP. The Mg(2+) site is built by Ser130 and Glu162. Catalysis depends on Asp174, which acts as the Proton acceptor. Tyr223 provides a ligand contact to substrate.

It belongs to the GHMP kinase family. GalK subfamily.

It localises to the cytoplasm. It carries out the reaction alpha-D-galactose + ATP = alpha-D-galactose 1-phosphate + ADP + H(+). It functions in the pathway carbohydrate metabolism; galactose metabolism. In terms of biological role, catalyzes the transfer of the gamma-phosphate of ATP to D-galactose to form alpha-D-galactose-1-phosphate (Gal-1-P). This Shigella flexneri serotype 5b (strain 8401) protein is Galactokinase.